The following is a 344-amino-acid chain: Phosphoserine phosphatase (344 aa).

The region spanning 48–120 (VVTILGKDRV…ERLGLDIVMQ (73 aa)) is the ACT domain. Catalysis depends on D135, which acts as the Nucleophile. 2 residues coordinate Mg(2+): D135 and D137. The active-site Proton donor is the D137. Substrate is bound by residues E144, R180, 223 to 224 (SG), and K268. D291 contributes to the Mg(2+) binding site.

This sequence belongs to the HAD-like hydrolase superfamily. SerB family. The cofactor is Mg(2+).

It catalyses the reaction O-phospho-L-serine + H2O = L-serine + phosphate. The catalysed reaction is O-phospho-D-serine + H2O = D-serine + phosphate. It functions in the pathway amino-acid biosynthesis; L-serine biosynthesis; L-serine from 3-phospho-D-glycerate: step 3/3. This chain is Phosphoserine phosphatase, found in Archaeoglobus fulgidus (strain ATCC 49558 / DSM 4304 / JCM 9628 / NBRC 100126 / VC-16).